The following is a 468-amino-acid chain: Trehalose-2-sulfate acyltransferase PapA2 (468 aa).

Belongs to the PapA acyltransferase family.

The catalysed reaction is 2-O-sulfo-alpha,alpha-trehalose + hexadecanoyl-CoA = 2-O-sulfo-2'-O-hexadecanoyl-alpha,alpha-trehalose + CoA. Its function is as follows. Catalyzes the acylation of trehalose-2-sulfate by adding the palmitoyl group at the 2'-position to yield the intermediate trehalose-2-sulfate-2'-palmitate (SL659). The protein is Trehalose-2-sulfate acyltransferase PapA2 (papA2) of Mycobacterium tuberculosis (strain ATCC 25177 / H37Ra).